The following is a 56-amino-acid chain: Conotoxin Cal6.41c (56 aa).

The signal sequence occupies residues 1-23 (MSGSGAMLLGLLILVAMATSLDT). 3 disulfide bridges follow: Cys27–Cys41, Cys33–Cys50, and Cys40–Cys54.

Expressed by the venom duct.

It localises to the secreted. Its function is as follows. Probable neurotoxin. In Californiconus californicus (California cone), this protein is Conotoxin Cal6.41c.